The chain runs to 222 residues: Voltage-dependent calcium channel gamma-1 subunit (222 aa).

Residues 1-10 are Cytoplasmic-facing; that stretch reads MSPTEAPKVR. The chain crosses the membrane as a helical span at residues 11-29; sequence VTLFCILVGIVLAMTAVVS. The Extracellular portion of the chain corresponds to 30-108; the sequence is DHWAVLSPHM…TQKEYSISAA (79 aa). N43 and N79 each carry an N-linked (GlcNAc...) asparagine glycan. C57 and C80 form a disulfide bridge. The helical transmembrane segment at 109-129 threads the bilayer; sequence AISVFSLGFLIMGTICALMAF. The Cytoplasmic segment spans residues 130–134; sequence RKKRD. A helical transmembrane segment spans residues 135-155; that stretch reads YLLRPASMFYVFAGLCLFVSL. The Extracellular segment spans residues 156 to 179; it reads EVMRQSVKRMIDSEDTVWIEYYYS. Residues 180–204 traverse the membrane as a helical segment; sequence WSFACACAAFVLLFLGGISLLLFSL. Topologically, residues 205-222 are cytoplasmic; sequence PRMPQNPWESCMDAEPEH.

This sequence belongs to the PMP-22/EMP/MP20 family. CACNG subfamily. In terms of assembly, component of a calcium channel complex consisting of a pore-forming alpha subunit (CACNA1S) and the ancillary subunits CACNB1 or CACNB2, CACNG1 and CACNA2D1. The channel complex contains alpha, beta, gamma and delta subunits in a 1:1:1:1 ratio, i.e. it contains either CACNB1 or CACNB2. N-glycosylated. Skeletal muscle (at protein level).

It localises to the cell membrane. It is found in the sarcolemma. Regulatory subunit of the voltage-gated calcium channel that gives rise to L-type calcium currents in skeletal muscle. Regulates channel inactivation kinetics. The polypeptide is Voltage-dependent calcium channel gamma-1 subunit (CACNG1) (Oryctolagus cuniculus (Rabbit)).